The chain runs to 206 residues: Dephospho-CoA kinase (206 aa).

The DPCK domain occupies 4 to 200 (TVALTGGIGS…ASYLKLASQF (197 aa)). Position 12–17 (12–17 (GSGKST)) interacts with ATP.

The protein belongs to the CoaE family.

Its subcellular location is the cytoplasm. It carries out the reaction 3'-dephospho-CoA + ATP = ADP + CoA + H(+). It functions in the pathway cofactor biosynthesis; coenzyme A biosynthesis; CoA from (R)-pantothenate: step 5/5. Its function is as follows. Catalyzes the phosphorylation of the 3'-hydroxyl group of dephosphocoenzyme A to form coenzyme A. In Salmonella choleraesuis (strain SC-B67), this protein is Dephospho-CoA kinase.